The following is a 127-amino-acid chain: Dual endothelin-1/VEGF signal peptide receptor (127 aa).

Topologically, residues 1–65 (MNALYVTTVP…EMKSRWNWGS (65 aa)) are extracellular. Residues 66-84 (ITCIICFTCVGSQLSMSSS) traverse the membrane as a helical segment. Residues 85 to 127 (KASNFSGPLQLYQRGIGHITNSYKRPQAPAWPCLSSGTMGRSH) lie on the Cytoplasmic side of the membrane.

As to expression, widely expressed with higher levels in kidney and aorta.

It localises to the cell membrane. Dual receptor for both endothelin-1 and the signal sequence of vascular endothelial growth factor A. Does not act as a receptor for angiotensin-2. Does not bind the VEGFA mature protein. May play a role in angiogenesis with a significant role in cardiovascular and neural development. The chain is Dual endothelin-1/VEGF signal peptide receptor from Mus musculus (Mouse).